The chain runs to 355 residues: 3-dehydroquinate synthase (355 aa).

NAD(+) contacts are provided by residues G98 to D102, T122 to T123, K135, K144, and T162 to T165. Zn(2+) is bound by residues E177, H240, and H257.

Belongs to the sugar phosphate cyclases superfamily. Dehydroquinate synthase family. Co(2+) is required as a cofactor. Requires Zn(2+) as cofactor. It depends on NAD(+) as a cofactor.

The protein localises to the cytoplasm. The enzyme catalyses 7-phospho-2-dehydro-3-deoxy-D-arabino-heptonate = 3-dehydroquinate + phosphate. Its pathway is metabolic intermediate biosynthesis; chorismate biosynthesis; chorismate from D-erythrose 4-phosphate and phosphoenolpyruvate: step 2/7. In terms of biological role, catalyzes the conversion of 3-deoxy-D-arabino-heptulosonate 7-phosphate (DAHP) to dehydroquinate (DHQ). The protein is 3-dehydroquinate synthase of Dictyoglomus turgidum (strain DSM 6724 / Z-1310).